We begin with the raw amino-acid sequence, 214 residues long: UPF0301 protein blr1492 (214 aa).

A disordered region spans residues 1–22; that stretch reads MAPTGKRTGESTRSTGPAPPSS.

The protein belongs to the UPF0301 (AlgH) family.

This Bradyrhizobium diazoefficiens (strain JCM 10833 / BCRC 13528 / IAM 13628 / NBRC 14792 / USDA 110) protein is UPF0301 protein blr1492.